Consider the following 200-residue polypeptide: LexA repressor (200 aa).

Positions 28–48 (RAEIAQHFGFSSPNAAEQHLK) form a DNA-binding region, H-T-H motif. Catalysis depends on for autocatalytic cleavage activity residues S117 and K154.

The protein belongs to the peptidase S24 family. Homodimer.

The catalysed reaction is Hydrolysis of Ala-|-Gly bond in repressor LexA.. Represses a number of genes involved in the response to DNA damage (SOS response), including recA and lexA. In the presence of single-stranded DNA, RecA interacts with LexA causing an autocatalytic cleavage which disrupts the DNA-binding part of LexA, leading to derepression of the SOS regulon and eventually DNA repair. The sequence is that of LexA repressor from Thiobacillus denitrificans (strain ATCC 25259 / T1).